The sequence spans 220 residues: Deoxyribose-phosphate aldolase (220 aa).

D89 (proton donor/acceptor) is an active-site residue. K151 acts as the Schiff-base intermediate with acetaldehyde in catalysis. K180 (proton donor/acceptor) is an active-site residue.

Belongs to the DeoC/FbaB aldolase family. DeoC type 1 subfamily.

It is found in the cytoplasm. It carries out the reaction 2-deoxy-D-ribose 5-phosphate = D-glyceraldehyde 3-phosphate + acetaldehyde. Its pathway is carbohydrate degradation; 2-deoxy-D-ribose 1-phosphate degradation; D-glyceraldehyde 3-phosphate and acetaldehyde from 2-deoxy-alpha-D-ribose 1-phosphate: step 2/2. Catalyzes a reversible aldol reaction between acetaldehyde and D-glyceraldehyde 3-phosphate to generate 2-deoxy-D-ribose 5-phosphate. The polypeptide is Deoxyribose-phosphate aldolase (Streptococcus pneumoniae (strain Hungary19A-6)).